We begin with the raw amino-acid sequence, 582 residues long: Protein NRT1/ PTR FAMILY 5.2 (582 aa).

The next 11 membrane-spanning stretches (helical) occupy residues 77-97, 100-120, 141-161, 189-209, 217-237, 334-354, 370-390, 408-428, 452-472, 493-515, and 538-558; these read WVGTSWLTPILGAYVGDALLG, ITFVISCAIYFSGMMVLTLSV, ASVLQLAVFFGALYTLAIGTG, FFNWWMFSIFFGTLFANTVLV, WTLGYGLPTLGLAISITIFLL, PVLFITFVPSMMLAQINTLFV, IPPASLSGFVTLSMLISIVLY, ITLLQRMGIGLIFHILIMIVA, LPLTIFALLPQFVLMGMADSF, GTSYSTTSLAIGNFMSSFLLSTV, and YYYLFFAVLNLVNFVLFLVVV.

The protein belongs to the major facilitator superfamily. Proton-dependent oligopeptide transporter (POT/PTR) (TC 2.A.17) family. In terms of tissue distribution, expressed in roots. Detected in shoots, leaves and flowers.

The protein resides in the membrane. Peptide transporter involved in stress tolerance in seeds during germination and in defense against virulent bacterial pathogens. This is Protein NRT1/ PTR FAMILY 5.2 (NPF5.2) from Arabidopsis thaliana (Mouse-ear cress).